The chain runs to 879 residues: Phosphoenolpyruvate carboxylase (879 aa).

Active-site residues include histidine 138 and lysine 545.

This sequence belongs to the PEPCase type 1 family. The cofactor is Mg(2+).

It carries out the reaction oxaloacetate + phosphate = phosphoenolpyruvate + hydrogencarbonate. Functionally, forms oxaloacetate, a four-carbon dicarboxylic acid source for the tricarboxylic acid cycle. In Haemophilus influenzae (strain PittEE), this protein is Phosphoenolpyruvate carboxylase.